The following is a 222-amino-acid chain: Deoxyribose-phosphate aldolase (222 aa).

The active-site Proton donor/acceptor is aspartate 89. Lysine 152 functions as the Schiff-base intermediate with acetaldehyde in the catalytic mechanism. Catalysis depends on lysine 181, which acts as the Proton donor/acceptor.

The protein belongs to the DeoC/FbaB aldolase family. DeoC type 1 subfamily.

The protein localises to the cytoplasm. The catalysed reaction is 2-deoxy-D-ribose 5-phosphate = D-glyceraldehyde 3-phosphate + acetaldehyde. Its pathway is carbohydrate degradation; 2-deoxy-D-ribose 1-phosphate degradation; D-glyceraldehyde 3-phosphate and acetaldehyde from 2-deoxy-alpha-D-ribose 1-phosphate: step 2/2. In terms of biological role, catalyzes a reversible aldol reaction between acetaldehyde and D-glyceraldehyde 3-phosphate to generate 2-deoxy-D-ribose 5-phosphate. The polypeptide is Deoxyribose-phosphate aldolase (Clostridium novyi (strain NT)).